The primary structure comprises 170 residues: Ribosome maturation factor RimM (170 aa).

Residues 92–163 (KEGWYYFELE…RMDVELPPGL (72 aa)) enclose the PRC barrel domain.

This sequence belongs to the RimM family. As to quaternary structure, binds ribosomal protein uS19.

The protein localises to the cytoplasm. An accessory protein needed during the final step in the assembly of 30S ribosomal subunit, possibly for assembly of the head region. Essential for efficient processing of 16S rRNA. May be needed both before and after RbfA during the maturation of 16S rRNA. It has affinity for free ribosomal 30S subunits but not for 70S ribosomes. The polypeptide is Ribosome maturation factor RimM (Desulfitobacterium hafniense (strain Y51)).